The sequence spans 279 residues: Probable thymidylate synthase (279 aa).

Residues Arg-21 and 136 to 137 (RR) contribute to the dUMP site. The Nucleophile role is filled by Cys-156. Residues 177–180 (RSVD), Asn-188, and 218–220 (HIY) each bind dUMP. Residue Asp-180 participates in (6R)-5,10-methylene-5,6,7,8-tetrahydrofolate binding.

The protein belongs to the thymidylate synthase family.

The enzyme catalyses dUMP + (6R)-5,10-methylene-5,6,7,8-tetrahydrofolate = 7,8-dihydrofolate + dTMP. Sythesizes the thymine necessary for the viral DNA replication. The chain is Probable thymidylate synthase from Escherichia coli (Enterobacteria phage T5).